Reading from the N-terminus, the 515-residue chain is Bifunctional purine biosynthesis protein PurH (515 aa).

The MGS-like domain occupies 1–145; sequence MTKRALISVS…KNHASVTVVV (145 aa).

Belongs to the PurH family.

It catalyses the reaction (6R)-10-formyltetrahydrofolate + 5-amino-1-(5-phospho-beta-D-ribosyl)imidazole-4-carboxamide = 5-formamido-1-(5-phospho-D-ribosyl)imidazole-4-carboxamide + (6S)-5,6,7,8-tetrahydrofolate. The enzyme catalyses IMP + H2O = 5-formamido-1-(5-phospho-D-ribosyl)imidazole-4-carboxamide. It participates in purine metabolism; IMP biosynthesis via de novo pathway; 5-formamido-1-(5-phospho-D-ribosyl)imidazole-4-carboxamide from 5-amino-1-(5-phospho-D-ribosyl)imidazole-4-carboxamide (10-formyl THF route): step 1/1. The protein operates within purine metabolism; IMP biosynthesis via de novo pathway; IMP from 5-formamido-1-(5-phospho-D-ribosyl)imidazole-4-carboxamide: step 1/1. The polypeptide is Bifunctional purine biosynthesis protein PurH (Streptococcus mutans serotype c (strain ATCC 700610 / UA159)).